Here is a 329-residue protein sequence, read N- to C-terminus: Ribosomal RNA small subunit methyltransferase C (329 aa).

Belongs to the methyltransferase superfamily. RsmC family. In terms of assembly, monomer.

It localises to the cytoplasm. It carries out the reaction guanosine(1207) in 16S rRNA + S-adenosyl-L-methionine = N(2)-methylguanosine(1207) in 16S rRNA + S-adenosyl-L-homocysteine + H(+). Functionally, specifically methylates the guanine in position 1207 of 16S rRNA in the 30S particle. In Actinobacillus pleuropneumoniae serotype 5b (strain L20), this protein is Ribosomal RNA small subunit methyltransferase C.